Consider the following 260-residue polypeptide: RxLR effector protein BLR38 (260 aa).

The N-terminal stretch at Met-1–Gly-18 is a signal peptide. The RxLR signature appears at Arg-46 to Arg-49. Positions Met-136–Glu-148 match the Nuclear localuization signal (NLS) motif.

Belongs to the RxLR effector family.

It is found in the secreted. The protein resides in the host nucleus. Its function is as follows. Secreted effector that triggers a robust hypersensitive response (HR) in Lactuca serriola LS102. The response to BLN06 was visible as strong necrosis. Although effector recognition is frequently associated with single dominant R gene loci, the recognition of BLR38 requires 2 unlinked loci that display incomplete dominance. The polypeptide is RxLR effector protein BLR38 (Bremia lactucae (Lettuce downy mildew)).